Consider the following 420-residue polypeptide: MTSTQAIFEKVQKVKKTINTATTAEKNHALEEMAKQLWLSRTDILAANELDMTTAKGKISDVMLDRLYLDEERIAAMAEGIRQLIDLEDPVGQVLERTELDNGLVISKKRVAMGVIGIIYESRPNVTSDAAALALKSGSAVVLRSGKDAYQTALAIVTALKEGLAQTKISPDCIQLVSDTSRASAQAMMKAKGYLDLLIPRGGAGLIQAVVENATVPVIETGTGIVHVYVDKDADQDKALAIIENAKTSRPSVCNAMEVLLVHEEIAERFLPRLQKMLVTDRVAAQEKTIELRLDEKAAQYISGSQARPEDFDTEFLDYVLAVKLVSSLEEAVEHIEAHSTHHSDAIVTENDSAAAYFTEQVDSAAVYVNASTRFTDGGQFGLGCEMGISTQKLHARGPMGLKELTSYKYVIQGTGQVRK.

This sequence belongs to the gamma-glutamyl phosphate reductase family.

The protein localises to the cytoplasm. It catalyses the reaction L-glutamate 5-semialdehyde + phosphate + NADP(+) = L-glutamyl 5-phosphate + NADPH + H(+). Its pathway is amino-acid biosynthesis; L-proline biosynthesis; L-glutamate 5-semialdehyde from L-glutamate: step 2/2. Functionally, catalyzes the NADPH-dependent reduction of L-glutamate 5-phosphate into L-glutamate 5-semialdehyde and phosphate. The product spontaneously undergoes cyclization to form 1-pyrroline-5-carboxylate. This chain is Gamma-glutamyl phosphate reductase, found in Streptococcus sanguinis (strain SK36).